A 204-amino-acid polypeptide reads, in one-letter code: Thymidylate kinase (204 aa).

11–18 (GLDKSGKT) contributes to the ATP binding site.

This sequence belongs to the thymidylate kinase family.

The enzyme catalyses dTMP + ATP = dTDP + ADP. Its pathway is pyrimidine metabolism; dTTP biosynthesis. This is Thymidylate kinase (TMK) from Cowpox virus (strain GRI-90 / Grishak) (CPV).